The primary structure comprises 77 residues: Translation initiation factor IF-1, chloroplastic (77 aa).

In terms of domain architecture, S1-like spans 1–71 (MKEQKLIHEG…TRGRIIYRLR (71 aa)).

Belongs to the IF-1 family. As to quaternary structure, component of the 30S ribosomal translation pre-initiation complex which assembles on the 30S ribosome in the order IF-2 and IF-3, IF-1 and N-formylmethionyl-tRNA(fMet); mRNA recruitment can occur at any time during PIC assembly.

It localises to the plastid. The protein localises to the chloroplast. One of the essential components for the initiation of protein synthesis. Stabilizes the binding of IF-2 and IF-3 on the 30S subunit to which N-formylmethionyl-tRNA(fMet) subsequently binds. Helps modulate mRNA selection, yielding the 30S pre-initiation complex (PIC). Upon addition of the 50S ribosomal subunit IF-1, IF-2 and IF-3 are released leaving the mature 70S translation initiation complex. The polypeptide is Translation initiation factor IF-1, chloroplastic (Acorus calamus var. americanus (American sweet flag)).